We begin with the raw amino-acid sequence, 3010 residues long: Probable polyketide synthase 2 (3010 aa).

The 424-residue stretch at serine 9–glutamate 432 folds into the Ketosynthase family 3 (KS3) domain. Active-site for beta-ketoacyl synthase activity residues include cysteine 174, histidine 313, and histidine 353. The interval glycine 629–tyrosine 662 is acyl/malonyl transferase. Residue serine 639 is the For acyl/malonyl transferase activity of the active site. An N-terminal hotdog fold region spans residues alanine 944 to serine 1063. The 292-residue stretch at alanine 944 to asparagine 1235 folds into the PKS/mFAS DH domain. Histidine 976 (proton acceptor; for dehydratase activity) is an active-site residue. The interval asparagine 1080–asparagine 1235 is C-terminal hotdog fold. Residue aspartate 1146 is the Proton donor; for dehydratase activity of the active site. The Carrier domain maps to aspartate 2482–valine 2559. The residue at position 2519 (serine 2519) is an O-(pantetheine 4'-phosphoryl)serine.

Pantetheine 4'-phosphate is required as a cofactor.

Its function is as follows. Probable polyketide synthase. This is Probable polyketide synthase 2 (pks2) from Dictyostelium discoideum (Social amoeba).